The primary structure comprises 815 residues: Phosphatidylinositol 4-phosphate 5-kinase 9 (815 aa).

MORN repeat units follow at residues 58–80 (YSGSLLGNVPEGPGKYIWSDGCV), 81–103 (YDGEWRRGMRHGIGNMRWASGAS), 104–126 (YDGEFSGGYMHGSGTYVDANKLT), 127–149 (YKGRWRLNLKHGLGYQVYPNGDV), 150–172 (FEGSWIQGLGEGPGKYTWANKNV), 173–195 (YLGDMKGGKMSGKGTLTWVTGDS), 196–218 (YEGSWLNGMMHGVGVYTWSDGGC), and 219–240 (YVGTWTRGLKDGKGSFYSAGTR). The region spanning 391 to 809 (GHRSYDLMLS…RFLEFIKKVF (419 aa)) is the PIPK domain. An activation loop region spans residues 769-790 (YNMTKKIEHAYKSLHFDSLSIS).

Interacts with CINV1. As to expression, widely expressed.

Its subcellular location is the membrane. The protein resides in the nucleus. It carries out the reaction a 1,2-diacyl-sn-glycero-3-phospho-(1D-myo-inositol 4-phosphate) + ATP = a 1,2-diacyl-sn-glycero-3-phospho-(1D-myo-inositol-4,5-bisphosphate) + ADP + H(+). In terms of biological role, plays a role in sugar-mediated root development. Interaction with CINV1 induces repression of CINV1 activity and negative regulation of sugar-mediated root cell elongation. The polypeptide is Phosphatidylinositol 4-phosphate 5-kinase 9 (PIP5K9) (Arabidopsis thaliana (Mouse-ear cress)).